A 259-amino-acid chain; its full sequence is Heat-labile enterotoxin IIA, A chain (259 aa).

A signal peptide spans 1-18 (MIKHVLLFFVFISFSVSA). NAD(+) is bound at residue 23–37 (RADSRTPDEIRRAGG). Glu-128 is a catalytic residue. An intrachain disulfide couples Cys-203 to Cys-215.

It belongs to the enterotoxin A family. As to quaternary structure, heterohexamer of one A chain and of five B chains.

In terms of biological role, the biological activity of the toxin is produced by the A chain, which activates intracellular adenyl cyclase. The sequence is that of Heat-labile enterotoxin IIA, A chain from Escherichia coli.